Consider the following 162-residue polypeptide: ATP synthase subunit b (162 aa).

The helical transmembrane segment at Thr6–Trp25 threads the bilayer.

The protein belongs to the ATPase B chain family. F-type ATPases have 2 components, F(1) - the catalytic core - and F(0) - the membrane proton channel. F(1) has five subunits: alpha(3), beta(3), gamma(1), delta(1), epsilon(1). F(0) has three main subunits: a(1), b(2) and c(10-14). The alpha and beta chains form an alternating ring which encloses part of the gamma chain. F(1) is attached to F(0) by a central stalk formed by the gamma and epsilon chains, while a peripheral stalk is formed by the delta and b chains.

It localises to the cell membrane. F(1)F(0) ATP synthase produces ATP from ADP in the presence of a proton or sodium gradient. F-type ATPases consist of two structural domains, F(1) containing the extramembraneous catalytic core and F(0) containing the membrane proton channel, linked together by a central stalk and a peripheral stalk. During catalysis, ATP synthesis in the catalytic domain of F(1) is coupled via a rotary mechanism of the central stalk subunits to proton translocation. Its function is as follows. Component of the F(0) channel, it forms part of the peripheral stalk, linking F(1) to F(0). In Lacticaseibacillus paracasei (strain ATCC 334 / BCRC 17002 / CCUG 31169 / CIP 107868 / KCTC 3260 / NRRL B-441) (Lactobacillus paracasei), this protein is ATP synthase subunit b.